Consider the following 72-residue polypeptide: Large ribosomal subunit protein bL31 (72 aa).

Zn(2+) contacts are provided by Cys16, Cys18, Cys38, and Cys41.

It belongs to the bacterial ribosomal protein bL31 family. Type A subfamily. In terms of assembly, part of the 50S ribosomal subunit. Requires Zn(2+) as cofactor.

Its function is as follows. Binds the 23S rRNA. The chain is Large ribosomal subunit protein bL31 from Aliivibrio salmonicida (strain LFI1238) (Vibrio salmonicida (strain LFI1238)).